We begin with the raw amino-acid sequence, 149 residues long: MADQLTDEQIAEFKEAFSLFDKDGDGCITTKELGTVMRSLGQNPTEAELQDMINEVDADGNGTIDFPELLNLMARKMKDTDSEEELKEAFRVFDKDQNGFISAAELRHVMTNLGEKLTDEEVDEMIREADVDGDGQINYEEFVKVMMAK.

Position 2 is an N-acetylalanine (Ala-2). 4 EF-hand domains span residues 8–43 (EQIA…LGQN), 44–79 (PTEA…KMKD), 81–116 (DSEE…LGEK), and 117–149 (LTDE…MMAK). Ca(2+) contacts are provided by Asp-21, Asp-23, Asp-25, Cys-27, Glu-32, Asp-57, Asp-59, Asn-61, Thr-63, Glu-68, Asp-94, Asp-96, Asn-98, and Glu-105. Lys-116 is subject to N6,N6,N6-trimethyllysine. Ca(2+) is bound by residues Asp-130, Asp-132, Asp-134, Gln-136, and Glu-141.

Belongs to the calmodulin family.

Calmodulin mediates the control of a large number of enzymes, ion channels and other proteins by Ca(2+). Among the enzymes to be stimulated by the calmodulin-Ca(2+) complex are a number of protein kinases and phosphatases. This chain is Calmodulin (CALM1), found in Zea mays (Maize).